An 853-amino-acid polypeptide reads, in one-letter code: Trimethylguanosine synthase (853 aa).

The interval 54-84 (NNAGDQGTEEEEDGHSNGTAESHSPNESDLD) is disordered. Phosphothreonine is present on Thr-61. Positions 69-80 (SNGTAESHSPNE) are enriched in polar residues. Ser-81, Ser-85, Ser-92, and Ser-139 each carry phosphoserine. Tyr-144 carries the post-translational modification Phosphotyrosine. Phosphoserine is present on Ser-152. 2 disordered regions span residues 328–437 (VEQS…DDNG) and 523–549 (ETSQDSLSQNKMQDTCTSSDSEEQDMS). Residues 365–383 (KENDISENRSSDQPAKELQ) are compositionally biased toward basic and acidic residues. Residues Ser-405 and Ser-431 each carry the phosphoserine modification. Residues 424 to 435 (DVDENPDSEVDD) show a composition bias toward acidic residues. The segment covering 526–541 (QDSLSQNKMQDTCTSS) has biased composition (polar residues). Ser-572 bears the Phosphoserine mark. The disordered stretch occupies residues 594 to 623 (CSTEEIPNSPHAETEVEIKKKKKKNKNKKI). Basic residues predominate over residues 612–621 (KKKKKKNKNK). Asp-711 is a binding site for S-adenosyl-L-methionine.

Belongs to the methyltransferase superfamily. Trimethylguanosine synthase family. In terms of assembly, may form homooligomers. Interacts with CREBBP/CBP, EED/WAIT1, EP300/P300, NCOA6/PRIP, PPARBP/PBP and SMN. Ubiquitously expressed.

It is found in the cytoplasm. The protein localises to the nucleus. It localises to the cajal body. Its subcellular location is the nucleolus. It catalyses the reaction a 5'-end (N(7)-methyl 5'-triphosphoguanosine)-ribonucleoside in snRNA + S-adenosyl-L-methionine = a 5'-end (N(2),N(7)-dimethyl 5'-triphosphoguanosine)-ribonucleoside in snRNA + S-adenosyl-L-homocysteine + H(+). The enzyme catalyses a 5'-end (N(7)-methyl 5'-triphosphoguanosine)-ribonucleoside in snoRNA + S-adenosyl-L-methionine = a 5'-end (N(2),N(7)-dimethyl 5'-triphosphoguanosine)-ribonucleoside in snoRNA + S-adenosyl-L-homocysteine + H(+). It carries out the reaction a 5'-end (N(2),N(7)-dimethyl 5'-triphosphoguanosine)-ribonucleoside in snRNA + S-adenosyl-L-methionine = a 5'-end (N(2),N(2),N(7)-trimethyl 5'-triphosphoguanosine)-ribonucleoside in snRNA + S-adenosyl-L-homocysteine + H(+). The catalysed reaction is a 5'-end (N(2),N(7)-dimethyl 5'-triphosphoguanosine)-ribonucleoside in snoRNA + S-adenosyl-L-methionine = a 5'-end (N(2),N(2),N(7)-trimethyl 5'-triphosphoguanosine)-ribonucleoside in snoRNA + S-adenosyl-L-homocysteine + H(+). Its function is as follows. Catalyzes the 2 serial methylation steps for the conversion of the 7-monomethylguanosine (m(7)G) caps of snRNAs and snoRNAs to a 2,2,7-trimethylguanosine (m(2,2,7)G) cap structure. The enzyme is specific for guanine, and N7 methylation must precede N2 methylation. Hypermethylation of the m7G cap of U snRNAs leads to their concentration in nuclear foci, their colocalization with coilin and the formation of canonical Cajal bodies (CBs). Plays a role in transcriptional regulation. The chain is Trimethylguanosine synthase (Tgs1) from Mus musculus (Mouse).